An 80-amino-acid chain; its full sequence is Large ribosomal subunit protein uL24 (80 aa).

It belongs to the universal ribosomal protein uL24 family. As to quaternary structure, part of the 50S ribosomal subunit.

Functionally, one of two assembly initiator proteins, it binds directly to the 5'-end of the 23S rRNA, where it nucleates assembly of the 50S subunit. In terms of biological role, one of the proteins that surrounds the polypeptide exit tunnel on the outside of the subunit. The protein is Large ribosomal subunit protein uL24 of Chlorobaculum parvum (strain DSM 263 / NCIMB 8327) (Chlorobium vibrioforme subsp. thiosulfatophilum).